Consider the following 242-residue polypeptide: ATP-dependent dethiobiotin synthetase BioD (242 aa).

Residue 12-17 (SVGKTI) participates in ATP binding. T16 is a Mg(2+) binding site. The active site involves K37. D66 contacts ATP. Positions 66 and 124 each coordinate Mg(2+). 184 to 185 (NR) contributes to the ATP binding site.

This sequence belongs to the dethiobiotin synthetase family. Homodimer. Mg(2+) is required as a cofactor.

Its subcellular location is the cytoplasm. The enzyme catalyses (7R,8S)-7,8-diammoniononanoate + CO2 + ATP = (4R,5S)-dethiobiotin + ADP + phosphate + 3 H(+). It functions in the pathway cofactor biosynthesis; biotin biosynthesis; biotin from 7,8-diaminononanoate: step 1/2. Its function is as follows. Catalyzes a mechanistically unusual reaction, the ATP-dependent insertion of CO2 between the N7 and N8 nitrogen atoms of 7,8-diaminopelargonic acid (DAPA, also called 7,8-diammoniononanoate) to form a ureido ring. This is ATP-dependent dethiobiotin synthetase BioD from Mannheimia succiniciproducens (strain KCTC 0769BP / MBEL55E).